Consider the following 184-residue polypeptide: ATP synthase subunit b, chloroplastic (184 aa).

The helical transmembrane segment at 27 to 49 threads the bilayer; the sequence is LATNPINLSVVLGVLIFFGKGVL.

The protein belongs to the ATPase B chain family. F-type ATPases have 2 components, F(1) - the catalytic core - and F(0) - the membrane proton channel. F(1) has five subunits: alpha(3), beta(3), gamma(1), delta(1), epsilon(1). F(0) has four main subunits: a(1), b(1), b'(1) and c(10-14). The alpha and beta chains form an alternating ring which encloses part of the gamma chain. F(1) is attached to F(0) by a central stalk formed by the gamma and epsilon chains, while a peripheral stalk is formed by the delta, b and b' chains.

The protein localises to the plastid. The protein resides in the chloroplast thylakoid membrane. In terms of biological role, f(1)F(0) ATP synthase produces ATP from ADP in the presence of a proton or sodium gradient. F-type ATPases consist of two structural domains, F(1) containing the extramembraneous catalytic core and F(0) containing the membrane proton channel, linked together by a central stalk and a peripheral stalk. During catalysis, ATP synthesis in the catalytic domain of F(1) is coupled via a rotary mechanism of the central stalk subunits to proton translocation. Component of the F(0) channel, it forms part of the peripheral stalk, linking F(1) to F(0). This is ATP synthase subunit b, chloroplastic from Oenothera elata subsp. hookeri (Hooker's evening primrose).